Here is a 181-residue protein sequence, read N- to C-terminus: Crossover junction endodeoxyribonuclease RuvC (181 aa).

Active-site residues include D7, E67, and D139. Positions 7, 67, and 139 each coordinate Mg(2+).

It belongs to the RuvC family. In terms of assembly, homodimer which binds Holliday junction (HJ) DNA. The HJ becomes 2-fold symmetrical on binding to RuvC with unstacked arms; it has a different conformation from HJ DNA in complex with RuvA. In the full resolvosome a probable DNA-RuvA(4)-RuvB(12)-RuvC(2) complex forms which resolves the HJ. The cofactor is Mg(2+).

Its subcellular location is the cytoplasm. The enzyme catalyses Endonucleolytic cleavage at a junction such as a reciprocal single-stranded crossover between two homologous DNA duplexes (Holliday junction).. Functionally, the RuvA-RuvB-RuvC complex processes Holliday junction (HJ) DNA during genetic recombination and DNA repair. Endonuclease that resolves HJ intermediates. Cleaves cruciform DNA by making single-stranded nicks across the HJ at symmetrical positions within the homologous arms, yielding a 5'-phosphate and a 3'-hydroxyl group; requires a central core of homology in the junction. The consensus cleavage sequence is 5'-(A/T)TT(C/G)-3'. Cleavage occurs on the 3'-side of the TT dinucleotide at the point of strand exchange. HJ branch migration catalyzed by RuvA-RuvB allows RuvC to scan DNA until it finds its consensus sequence, where it cleaves and resolves the cruciform DNA. The polypeptide is Crossover junction endodeoxyribonuclease RuvC (Cupriavidus metallidurans (strain ATCC 43123 / DSM 2839 / NBRC 102507 / CH34) (Ralstonia metallidurans)).